We begin with the raw amino-acid sequence, 529 residues long: Peptide chain release factor 3 (529 aa).

The tr-type G domain maps to 11-280 (SKRRTFAIIS…GLVAWAPAPM (270 aa)). Residues 20–27 (SHPDAGKT), 88–92 (DTPGH), and 142–145 (NKLD) each bind GTP.

This sequence belongs to the TRAFAC class translation factor GTPase superfamily. Classic translation factor GTPase family. PrfC subfamily.

The protein resides in the cytoplasm. In terms of biological role, increases the formation of ribosomal termination complexes and stimulates activities of RF-1 and RF-2. It binds guanine nucleotides and has strong preference for UGA stop codons. It may interact directly with the ribosome. The stimulation of RF-1 and RF-2 is significantly reduced by GTP and GDP, but not by GMP. The protein is Peptide chain release factor 3 of Pectobacterium carotovorum subsp. carotovorum (strain PC1).